Consider the following 256-residue polypeptide: uncharacterized protein (256 aa).

Residues 1-24 (MIKRVNKLVLGISLLFLVISIAAG) form the signal peptide. A lipid anchor (N-palmitoyl cysteine) is attached at cysteine 25. The S-diacylglycerol cysteine moiety is linked to residue cysteine 25.

It belongs to the staphylococcal tandem lipoprotein family.

It is found in the cell membrane. This is an uncharacterized protein from Staphylococcus aureus.